A 110-amino-acid polypeptide reads, in one-letter code: Large ribosomal subunit protein uL22 (110 aa).

Belongs to the universal ribosomal protein uL22 family. Part of the 50S ribosomal subunit.

In terms of biological role, this protein binds specifically to 23S rRNA; its binding is stimulated by other ribosomal proteins, e.g. L4, L17, and L20. It is important during the early stages of 50S assembly. It makes multiple contacts with different domains of the 23S rRNA in the assembled 50S subunit and ribosome. The globular domain of the protein is located near the polypeptide exit tunnel on the outside of the subunit, while an extended beta-hairpin is found that lines the wall of the exit tunnel in the center of the 70S ribosome. The protein is Large ribosomal subunit protein uL22 of Enterobacter sp. (strain 638).